The sequence spans 284 residues: Nucleotide-binding protein Sbal223_0704 (284 aa).

ATP is bound at residue 8-15 (GRSGSGKS). A GTP-binding site is contributed by 56-59 (DVRN).

This sequence belongs to the RapZ-like family.

In terms of biological role, displays ATPase and GTPase activities. The polypeptide is Nucleotide-binding protein Sbal223_0704 (Shewanella baltica (strain OS223)).